Reading from the N-terminus, the 335-residue chain is Phosphatidylcholine:ceramide cholinephosphotransferase 2 (335 aa).

5 helical membrane passes run 60-80 (LTAF…LTVI), 104-124 (WSVG…IIFL), 136-156 (FLLG…TFLP), 200-220 (ILCG…MYFV), and 229-249 (LVIL…ALVV). H210 is an active-site residue. Catalysis depends on residues H253 and D257. A helical membrane pass occupies residues 258-278 (VLIAYWLTSHVFWSYHQIFEM). Topologically, residues 279 to 335 (RKDDRPQAPLSRLWWFWLCYWFESDVADGKLVNKWNWPLEGPQRMHTIMNRINYKLQ) are cytoplasmic.

Belongs to the sphingomyelin synthase family.

The protein localises to the membrane. The enzyme catalyses an N-acylsphing-4-enine + a 1,2-diacyl-sn-glycero-3-phosphocholine = a sphingomyelin + a 1,2-diacyl-sn-glycerol. It carries out the reaction an N-acyl-15-methylhexadecasphing-4-enine + a 1,2-diacyl-sn-glycero-3-phosphocholine = an N-acyl-15-methylhexadecasphing-4-enine-1-phosphocholine + a 1,2-diacyl-sn-glycerol. It functions in the pathway lipid metabolism; sphingolipid metabolism. Sphingomyelin synthases (SM synthase or SMS) synthesize the sphingolipid sphingomyelin (SM) through transfer of the phosphatidyl head group of 1,2-diacyl-sn-glycero-3-phosphocholine (phosphatidylcholine, PC) on to the primary hydroxyl of ceramide (N-acylsphingoid base), yielding 1,2-diacyl-sn-glycerol (diacylglycerol, DAG) as a side product. Functions as a bidirectional lipid cholinephosphotransferases capable of converting PC and ceramide to SM and DAG and vice versa depending on the respective levels of ceramide and DAG as phosphocholine acceptors, respectively. This Caenorhabditis elegans protein is Phosphatidylcholine:ceramide cholinephosphotransferase 2 (sms-2).